Consider the following 131-residue polypeptide: uncharacterized protein (131 aa).

This is an uncharacterized protein from Mycobacterium tuberculosis (strain CDC 1551 / Oshkosh).